We begin with the raw amino-acid sequence, 213 residues long: GTP cyclohydrolase 1 (213 aa).

Cys-104, His-107, and Cys-175 together coordinate Zn(2+).

Belongs to the GTP cyclohydrolase I family. In terms of assembly, toroid-shaped homodecamer, composed of two pentamers of five dimers.

It catalyses the reaction GTP + H2O = 7,8-dihydroneopterin 3'-triphosphate + formate + H(+). It participates in cofactor biosynthesis; 7,8-dihydroneopterin triphosphate biosynthesis; 7,8-dihydroneopterin triphosphate from GTP: step 1/1. This Brucella anthropi (strain ATCC 49188 / DSM 6882 / CCUG 24695 / JCM 21032 / LMG 3331 / NBRC 15819 / NCTC 12168 / Alc 37) (Ochrobactrum anthropi) protein is GTP cyclohydrolase 1.